The sequence spans 254 residues: uncharacterized protein (254 aa).

Residues Ile14–Lys81 enclose the S4 RNA-binding domain. Asp119 (nucleophile) is an active-site residue.

The protein belongs to the pseudouridine synthase RsuA family.

It carries out the reaction a uridine in RNA = a pseudouridine in RNA. This is an uncharacterized protein from Mycobacterium bovis (strain ATCC BAA-935 / AF2122/97).